Consider the following 164-residue polypeptide: Phosphopantetheine adenylyltransferase (164 aa).

Ser-9 serves as a coordination point for substrate. ATP contacts are provided by residues 9–10 and His-17; that span reads SF. Substrate contacts are provided by Lys-41, Val-78, and Arg-92. ATP is bound by residues 93–95, Glu-103, and 128–134; these read GLR and SRPITAT.

It belongs to the bacterial CoaD family. Homohexamer. The cofactor is Mg(2+).

Its subcellular location is the cytoplasm. The enzyme catalyses (R)-4'-phosphopantetheine + ATP + H(+) = 3'-dephospho-CoA + diphosphate. Its pathway is cofactor biosynthesis; coenzyme A biosynthesis; CoA from (R)-pantothenate: step 4/5. Its function is as follows. Reversibly transfers an adenylyl group from ATP to 4'-phosphopantetheine, yielding dephospho-CoA (dPCoA) and pyrophosphate. This chain is Phosphopantetheine adenylyltransferase, found in Rhizobium etli (strain ATCC 51251 / DSM 11541 / JCM 21823 / NBRC 15573 / CFN 42).